Consider the following 513-residue polypeptide: L-threonine dehydratase biosynthetic IlvA (513 aa).

Lys-61 is subject to N6-(pyridoxal phosphate)lysine. Pyridoxal 5'-phosphate is bound by residues Asn-88, 187–191 (GGGGL), and Ser-314. 2 consecutive ACT-like domains span residues 338–409 (ALLA…DLSN) and 432–504 (RLYS…DVTE).

Belongs to the serine/threonine dehydratase family. In terms of assembly, homotetramer. Requires pyridoxal 5'-phosphate as cofactor.

It carries out the reaction L-threonine = 2-oxobutanoate + NH4(+). It participates in amino-acid biosynthesis; L-isoleucine biosynthesis; 2-oxobutanoate from L-threonine: step 1/1. In terms of biological role, catalyzes the anaerobic formation of alpha-ketobutyrate and ammonia from threonine in a two-step reaction. The first step involved a dehydration of threonine and a production of enamine intermediates (aminocrotonate), which tautomerizes to its imine form (iminobutyrate). Both intermediates are unstable and short-lived. The second step is the nonenzymatic hydrolysis of the enamine/imine intermediates to form 2-ketobutyrate and free ammonia. In the low water environment of the cell, the second step is accelerated by RidA. This chain is L-threonine dehydratase biosynthetic IlvA (ilvA), found in Pasteurella multocida (strain Pm70).